Consider the following 132-residue polypeptide: uncharacterized protein (132 aa).

Residues 1–68 are disordered; the sequence is MCSAGELLRG…HTGEPVGDDY (68 aa). Residues 100 to 120 form a helical membrane-spanning segment; the sequence is VIVIFFWVMLWFLGLQALGLV.

The protein belongs to the FAM241 family.

The protein resides in the membrane. This is an uncharacterized protein from Homo sapiens (Human).